Consider the following 447-residue polypeptide: UDP-N-acetylmuramoylalanine--D-glutamate ligase (447 aa).

ATP is bound at residue 112–118; sequence GTNGKST.

The protein belongs to the MurCDEF family.

It localises to the cytoplasm. It catalyses the reaction UDP-N-acetyl-alpha-D-muramoyl-L-alanine + D-glutamate + ATP = UDP-N-acetyl-alpha-D-muramoyl-L-alanyl-D-glutamate + ADP + phosphate + H(+). The protein operates within cell wall biogenesis; peptidoglycan biosynthesis. Its function is as follows. Cell wall formation. Catalyzes the addition of glutamate to the nucleotide precursor UDP-N-acetylmuramoyl-L-alanine (UMA). The sequence is that of UDP-N-acetylmuramoylalanine--D-glutamate ligase from Legionella pneumophila (strain Paris).